The sequence spans 343 residues: MTTDTTGRTGNPAAAASPERFRYGFLKGNPQLTKNGELKHLLSIEGLPRSIVNHILDTAEQFVSVTDREVKKVPLLRGKSVFNLFFENSTRTRTTFEIAATRLSADVLNLNINASSTSKGESLLDTINNLSAMHADLFVVRHASSGAPYLIAEHCAPHVHVINAGDGRHAHPTQGLLDMYTIRHYKRDFTKLRVAIVGDILHSRVARSDIHALTTLGVPEVRAIGPRTLLPGGLEQMGVKVFNNLDEGLKGVDVIIMLRLQNERMSGALLPSAQEYFKTWGLTPERLALAAPDAIVMHPGPMNRGVEIDSQVADGPQSVILNQVTFGIAVRMAVMGIVAGNSD.

2 residues coordinate carbamoyl phosphate: arginine 91 and threonine 92. Position 119 (lysine 119) interacts with L-aspartate. Carbamoyl phosphate-binding residues include arginine 141, histidine 171, and glutamine 174. L-aspartate-binding residues include arginine 204 and arginine 259. Glycine 300 and proline 301 together coordinate carbamoyl phosphate.

Belongs to the aspartate/ornithine carbamoyltransferase superfamily. ATCase family. Heterododecamer (2C3:3R2) of six catalytic PyrB chains organized as two trimers (C3), and six regulatory PyrI chains organized as three dimers (R2).

The enzyme catalyses carbamoyl phosphate + L-aspartate = N-carbamoyl-L-aspartate + phosphate + H(+). It participates in pyrimidine metabolism; UMP biosynthesis via de novo pathway; (S)-dihydroorotate from bicarbonate: step 2/3. In terms of biological role, catalyzes the condensation of carbamoyl phosphate and aspartate to form carbamoyl aspartate and inorganic phosphate, the committed step in the de novo pyrimidine nucleotide biosynthesis pathway. The chain is Aspartate carbamoyltransferase catalytic subunit from Burkholderia ambifaria (strain MC40-6).